We begin with the raw amino-acid sequence, 640 residues long: MSLVSTAPYTYTPLNLLKEGTIANVYGVVKFFKPPYVSKGTDYCSVVTIVDQTNVKLTCMLFSGNYEALPIIYKVGDIVRFHRLKIQVYKNELQGINCSGFASLTFEGTVGMPVTARTSSKVFSFTPQDQKMVEALRVWASKHISASSTLVQLCDAQPMQYYDLTCQLLGKAQVDSTAFLLKVWDGTQTVLPSWRVSTQDLTFEGDLSHIERLQSLVVDILVYDNHVQVARSIEVGCFLRLYSLHTKLQPGNSETSSSESLRLEFHLHGGTSYGRGIRVLPDTSPCVDQLKKALEGANLPVTETSTGICQSENGDSSALSNSGSGAVSPYEEERCQQVSATILTNHQHLEKTPLCAILTQKAPQQYRVRAKLRSYLPRRLSQSVKLLCPKCHSVQEVPHGDSLDKILQDAATEAPDIKLKATSLYYSKVWTTEDQGGRQVAVHFVKNNGILPASSECLILIEGGRLCEVSKLSSKFHSVMPVRSGPESLELLTLSAPFLIQGKVHHYGCKQCSSLKPIQNLNSRFHKGPWTPSSVAEALGVVPLQYVFVMVFTLDDGTGVLEAYLKDSEHFFKIPASEVLTDDDLQRSLETIMDMICPPGIKVDAYPWLECLLKSYNVTIGTERRICYQIFDTTVAENVV.

It belongs to the telombin family. In terms of assembly, homodimer or homooligomer. Component of the shelterin complex (telosome) composed of TERF1, TERF2, TINF2, TERF2IP, ACD and POT1. Binds single-stranded telomeric DNA as a monomer. Associated component of the telomerase holoenzyme complex. Found in a complex with TERF1, TINF2 and TNKS1. Interacts with TNKS1. Forms heterodimers with ACD. Identified in a complex with ACD and single-stranded telomeric DNA.

The protein localises to the nucleus. The protein resides in the chromosome. Its subcellular location is the telomere. Its function is as follows. Component of the telomerase ribonucleoprotein (RNP) complex that is essential for the replication of chromosome termini. Is a component of the double-stranded telomeric DNA-binding TRF1 complex which is involved in the regulation of telomere length by cis-inhibition of telomerase. Also acts as a single-stranded telomeric DNA-binding protein and thus may act as a downstream effector of the TRF1 complex and may transduce information about telomere maintenance and/or length to the telomere terminus. Component of the shelterin complex (telosome) that is involved in the regulation of telomere length and protection. Shelterin associates with arrays of double-stranded TTAGGG repeats added by telomerase and protects chromosome ends; without its protective activity, telomeres are no longer hidden from the DNA damage surveillance and chromosome ends are inappropriately processed by DNA repair pathways. Binds to two or more telomeric single-stranded 5'-TTAGGG-3' repeats (G-strand) and with high specificity to a minimal telomeric single-stranded 5'-TAGGGTTAG-3' sequence. Binds telomeric single-stranded sequences internally or at proximity of a 3'-end. Its activity is TERT dependent but it does not increase TERT activity. The protein is Protection of telomeres protein 1 (Pot1) of Mus musculus (Mouse).